The primary structure comprises 253 residues: uncharacterized protein (253 aa).

Belongs to the DcsA family.

This is an uncharacterized protein from Bacillus subtilis (strain 168).